Reading from the N-terminus, the 136-residue chain is 5-hydroxyisourate hydrolase (136 aa).

The N-terminal stretch at 1–20 (MKRYILATAIASLVAAPAMA) is a signal peptide. H31, R69, and Y133 together coordinate substrate.

It belongs to the transthyretin family. 5-hydroxyisourate hydrolase subfamily. As to quaternary structure, homotetramer.

It is found in the periplasm. It catalyses the reaction 5-hydroxyisourate + H2O = 5-hydroxy-2-oxo-4-ureido-2,5-dihydro-1H-imidazole-5-carboxylate + H(+). Catalyzes the hydrolysis of 5-hydroxyisourate (HIU) to 2-oxo-4-hydroxy-4-carboxy-5-ureidoimidazoline (OHCU). This Salmonella typhi protein is 5-hydroxyisourate hydrolase (hiuH).